The primary structure comprises 515 residues: Putative pumilio homolog 8, chloroplastic (515 aa).

The disordered stretch occupies residues 1 to 33 (MMRGEFGEASSLSRSPSSPLQTEPHPQSPKFYR). Residues 1–70 (MMRGEFGEAS…LSSYFSNGLC (70 aa)) constitute a chloroplast transit peptide. A compositionally biased stretch (low complexity) spans 10–20 (SSLSRSPSSPL). The region spanning 174–515 (SGVGALFDHQ…RIFSRNLLKN (342 aa)) is the PUM-HD domain. Pumilio repeat units follow at residues 198 to 233 (EFQG…VIFS), 234 to 269 (EVIP…QIIL), 270 to 308 (MVTS…SLVK), 310 to 345 (ALRP…FIFE), 346 to 381 (DATK…KLVT), 382 to 417 (EISR…AMLA), 418 to 456 (QLKG…ELIS), and 457 to 490 (VPHF…TLVE).

Its subcellular location is the plastid. It localises to the chloroplast. The protein resides in the cytoplasm. Functionally, sequence-specific RNA-binding protein that regulates translation and mRNA stability by binding the 3'-UTR of target mRNAs. The sequence is that of Putative pumilio homolog 8, chloroplastic (APUM8) from Arabidopsis thaliana (Mouse-ear cress).